We begin with the raw amino-acid sequence, 147 residues long: MKLEEKVKELLSPILEDRGLKLVDIEYITGKRPVLRIYIYNPEGTSIDDCEYVSQRIGSILDVEDLIKTSYTLEVSSPGLDRKFKNIEEYNIFKGKDVVVKTKEPIEDKKIFKGILEGLEDGIVKLKQDNIVVEIPLDKISQTKLDF.

This sequence belongs to the RimP family.

The protein resides in the cytoplasm. In terms of biological role, required for maturation of 30S ribosomal subunits. This is Ribosome maturation factor RimP from Sulfurihydrogenibium azorense (strain DSM 15241 / OCM 825 / Az-Fu1).